Consider the following 535-residue polypeptide: T-complex protein 1 subunit beta (535 aa).

Alanine 2 is subject to N-acetylalanine. Serine 3 is modified (phosphoserine). At lysine 13 the chain carries N6-acetyllysine. An ADP-binding site is contributed by glycine 44. Glycine 44 serves as a coordination point for ATP. Position 97 (aspartate 97) interacts with Mg(2+). ADP-binding residues include glycine 98, threonine 99, threonine 100, serine 101, serine 168, and serine 169. Residues glycine 98, threonine 99, and threonine 100 each contribute to the ATP site. Lysine 181 carries the post-translational modification N6-acetyllysine. Residue lysine 248 forms a Glycyl lysine isopeptide (Lys-Gly) (interchain with G-Cter in SUMO2) linkage. At serine 260 the chain carries Phosphoserine. At threonine 261 the chain carries Phosphothreonine. ADP contacts are provided by glycine 410, glutamate 495, and lysine 500. The ATP site is built by glutamate 495 and lysine 500.

It belongs to the TCP-1 chaperonin family. In terms of assembly, component of the chaperonin-containing T-complex (TRiC), a hexadecamer composed of two identical back-to-back stacked rings enclosing a protein folding chamber. Each ring is made up of eight different subunits: TCP1/CCT1, CCT2, CCT3, CCT4, CCT5, CCT6A/CCT6, CCT7, CCT8. Interacts with PACRG. Interacts with FLCN. Interacts with DLEC1. Interacts with SVEP1. Post-translationally, the N-terminus is blocked.

The protein resides in the cytoplasm. The catalysed reaction is ATP + H2O = ADP + phosphate + H(+). Functionally, component of the chaperonin-containing T-complex (TRiC), a molecular chaperone complex that assists the folding of actin, tubulin and other proteins upon ATP hydrolysis. The TRiC complex mediates the folding of WRAP53/TCAB1, thereby regulating telomere maintenance. As part of the TRiC complex may play a role in the assembly of BBSome, a complex involved in ciliogenesis regulating transports vesicles to the cilia. The chain is T-complex protein 1 subunit beta (Cct2) from Mus musculus (Mouse).